Here is a 645-residue protein sequence, read N- to C-terminus: 1,4-alpha-glucan branching enzyme GlgB (645 aa).

Catalysis depends on Asp309, which acts as the Nucleophile. Residue Glu352 is the Proton donor of the active site. Residues 621–645 are disordered; sequence MRKGSKKQDGKKAELRSNATSRRKR. The span at 626-635 shows a compositional bias: basic and acidic residues; sequence KKQDGKKAEL.

This sequence belongs to the glycosyl hydrolase 13 family. GlgB subfamily. Monomer.

It catalyses the reaction Transfers a segment of a (1-&gt;4)-alpha-D-glucan chain to a primary hydroxy group in a similar glucan chain.. Its pathway is glycan biosynthesis; glycogen biosynthesis. Its function is as follows. Catalyzes the formation of the alpha-1,6-glucosidic linkages in glycogen by scission of a 1,4-alpha-linked oligosaccharide from growing alpha-1,4-glucan chains and the subsequent attachment of the oligosaccharide to the alpha-1,6 position. This Bacillus cytotoxicus (strain DSM 22905 / CIP 110041 / 391-98 / NVH 391-98) protein is 1,4-alpha-glucan branching enzyme GlgB.